The following is a 141-amino-acid chain: Hemoglobin subunit alpha-D (141 aa).

In terms of domain architecture, Globin spans 1–141 (MLTAEDKKLI…VAAVLAEKYR (141 aa)). Positions 58 and 87 each coordinate heme b.

This sequence belongs to the globin family. Heterotetramer of two alpha-D chains and two beta chains. As to expression, red blood cells.

Functionally, involved in oxygen transport from the lung to the various peripheral tissues. The chain is Hemoglobin subunit alpha-D (HBAD) from Anas platyrhynchos (Mallard).